Here is a 223-residue protein sequence, read N- to C-terminus: Pyridoxal phosphate homeostasis protein (223 aa).

Lysine 36 carries the post-translational modification N6-(pyridoxal phosphate)lysine.

Belongs to the pyridoxal phosphate-binding protein YggS/PROSC family. Monomer.

Pyridoxal 5'-phosphate (PLP)-binding protein, which is involved in PLP homeostasis. In Buchnera aphidicola subsp. Baizongia pistaciae (strain Bp), this protein is Pyridoxal phosphate homeostasis protein.